A 316-amino-acid chain; its full sequence is Protease HtpX homolog (316 aa).

A helical membrane pass occupies residues 16 to 36 (LFMALGFTIGGTGGAMIALVV). A Zn(2+)-binding site is contributed by histidine 130. Glutamate 131 is an active-site residue. Residue histidine 134 participates in Zn(2+) binding. Transmembrane regions (helical) follow at residues 145–165 (MTAT…FFGA) and 174–194 (LATI…QMAI). Glutamate 199 contributes to the Zn(2+) binding site. A disordered region spans residues 285–316 (PNFAALSERRGSVSSVPRTRRRSSALDPNGRG).

This sequence belongs to the peptidase M48B family. The cofactor is Zn(2+).

It is found in the cell inner membrane. This is Protease HtpX homolog from Rhizorhabdus wittichii (strain DSM 6014 / CCUG 31198 / JCM 15750 / NBRC 105917 / EY 4224 / RW1) (Sphingomonas wittichii).